The primary structure comprises 242 residues: UPF0309 protein BAbS19_II03080 (242 aa).

Positions 30–214 (AADLIAAAAR…ARLVGEGDAP (185 aa)) constitute an SIS domain.

Belongs to the UPF0309 family.

This chain is UPF0309 protein BAbS19_II03080, found in Brucella abortus (strain S19).